Consider the following 373-residue polypeptide: Peptide chain release factor 1-like, mitochondrial (373 aa).

The transit peptide at 1–25 (MRSGFLSGARRLWARRAFSRTPPPS) directs the protein to the mitochondrion. Positions 56–110 (QLAAAARLLSEKERELRDTESLLHDENEDLKKLAESEIALCQKQITELKHQIISL) form a coiled coil. Residues 229–293 (PKDLRIDTKR…LRARLYSMHL (65 aa)) are GGQ domain. Residues 243–245 (GGQ) carry the GGQ motif. Gln245 is subject to N5-methylglutamine.

The protein belongs to the prokaryotic/mitochondrial release factor family. Post-translationally, methylation of glutamine in the GGQ triplet by HEMK1 is conserved from bacteria to mammals.

The protein resides in the mitochondrion. Mitochondrial peptide chain release factor that directs the termination of translation in response to the peptide chain termination codons UAA and UAG. The polypeptide is Peptide chain release factor 1-like, mitochondrial (Mtrf1l) (Mus musculus (Mouse)).